Here is a 460-residue protein sequence, read N- to C-terminus: GTPase Der (460 aa).

EngA-type G domains are found at residues Pro4–Glu174 and Pro184–Ser361. GTP contacts are provided by residues Gly10–Ser17, Asp57–Leu61, Asn126–Glu129, Gly190–Ser197, Asp237–Ile241, and Asn302–Asp305. In terms of domain architecture, KH-like spans Arg362–Glu446.

The protein belongs to the TRAFAC class TrmE-Era-EngA-EngB-Septin-like GTPase superfamily. EngA (Der) GTPase family. Associates with the 50S ribosomal subunit.

Functionally, GTPase that plays an essential role in the late steps of ribosome biogenesis. In Thermomicrobium roseum (strain ATCC 27502 / DSM 5159 / P-2), this protein is GTPase Der.